Reading from the N-terminus, the 212-residue chain is Orotate phosphoribosyltransferase (212 aa).

Position 26 (lysine 26) interacts with 5-phospho-alpha-D-ribose 1-diphosphate. 34-35 contacts orotate; that stretch reads FF. 5-phospho-alpha-D-ribose 1-diphosphate contacts are provided by residues 72–73, arginine 98, lysine 99, lysine 102, histidine 104, and 123–131; these read YK and DDVITAGTA. Positions 127 and 155 each coordinate orotate.

This sequence belongs to the purine/pyrimidine phosphoribosyltransferase family. PyrE subfamily. As to quaternary structure, homodimer. Requires Mg(2+) as cofactor.

It catalyses the reaction orotidine 5'-phosphate + diphosphate = orotate + 5-phospho-alpha-D-ribose 1-diphosphate. It participates in pyrimidine metabolism; UMP biosynthesis via de novo pathway; UMP from orotate: step 1/2. Functionally, catalyzes the transfer of a ribosyl phosphate group from 5-phosphoribose 1-diphosphate to orotate, leading to the formation of orotidine monophosphate (OMP). The protein is Orotate phosphoribosyltransferase of Marinobacter nauticus (strain ATCC 700491 / DSM 11845 / VT8) (Marinobacter aquaeolei).